The primary structure comprises 482 residues: tRNA sulfurtransferase (482 aa).

One can recognise a THUMP domain in the interval 61–165; sequence VQICDALTRI…QDVLILVKAR (105 aa). Residues 183–184, Lys-265, Gly-287, and Gln-296 contribute to the ATP site; that span reads LI. A disulfide bridge links Cys-344 with Cys-456. The Rhodanese domain maps to 404–482; it reads FAPTDVLLDI…GFDNVKVYRP (79 aa). Cys-456 acts as the Cysteine persulfide intermediate in catalysis.

The protein belongs to the ThiI family.

It localises to the cytoplasm. The catalysed reaction is [ThiI sulfur-carrier protein]-S-sulfanyl-L-cysteine + a uridine in tRNA + 2 reduced [2Fe-2S]-[ferredoxin] + ATP + H(+) = [ThiI sulfur-carrier protein]-L-cysteine + a 4-thiouridine in tRNA + 2 oxidized [2Fe-2S]-[ferredoxin] + AMP + diphosphate. It carries out the reaction [ThiS sulfur-carrier protein]-C-terminal Gly-Gly-AMP + S-sulfanyl-L-cysteinyl-[cysteine desulfurase] + AH2 = [ThiS sulfur-carrier protein]-C-terminal-Gly-aminoethanethioate + L-cysteinyl-[cysteine desulfurase] + A + AMP + 2 H(+). The protein operates within cofactor biosynthesis; thiamine diphosphate biosynthesis. Its function is as follows. Catalyzes the ATP-dependent transfer of a sulfur to tRNA to produce 4-thiouridine in position 8 of tRNAs, which functions as a near-UV photosensor. Also catalyzes the transfer of sulfur to the sulfur carrier protein ThiS, forming ThiS-thiocarboxylate. This is a step in the synthesis of thiazole, in the thiamine biosynthesis pathway. The sulfur is donated as persulfide by IscS. The polypeptide is tRNA sulfurtransferase (Photorhabdus laumondii subsp. laumondii (strain DSM 15139 / CIP 105565 / TT01) (Photorhabdus luminescens subsp. laumondii)).